Consider the following 261-residue polypeptide: Small ribosomal subunit protein eS1z (261 aa).

The segment covering 1–18 has biased composition (basic residues); that stretch reads MAVGKNKRISKGKKGGKK. Residues 1 to 20 form a disordered region; that stretch reads MAVGKNKRISKGKKGGKKKA.

This sequence belongs to the eukaryotic ribosomal protein eS1 family. As to quaternary structure, component of the small ribosomal subunit. Mature ribosomes consist of a small (40S) and a large (60S) subunit. The 40S subunit contains about 33 different proteins and 1 molecule of RNA (18S). The 60S subunit contains about 49 different proteins and 3 molecules of RNA (25S, 5.8S and 5S).

Its subcellular location is the cytoplasm. The polypeptide is Small ribosomal subunit protein eS1z (Vitis vinifera (Grape)).